A 708-amino-acid polypeptide reads, in one-letter code: Exocyst complex component 5 (708 aa).

The residue at position 2 (A2) is an N-acetylalanine. A coiled-coil region spans residues 40-101 (KRLLEEFVNH…AFQHFQELDE (62 aa)). 3 positions are modified to phosphothreonine: T122, T395, and T405. A Phosphoserine modification is found at S412.

It belongs to the SEC10 family. In terms of assembly, the exocyst complex is composed of EXOC1, EXOC2, EXOC3, EXOC4, EXOC5, EXOC6, EXOC7 and EXOC8. Interacts with EXOC3L1.

Its subcellular location is the cytoplasm. It localises to the midbody. Component of the exocyst complex involved in the docking of exocytic vesicles with fusion sites on the plasma membrane. The polypeptide is Exocyst complex component 5 (Exoc5) (Mus musculus (Mouse)).